We begin with the raw amino-acid sequence, 188 residues long: Large ribosomal subunit protein eL18z (188 aa).

Belongs to the eukaryotic ribosomal protein eL18 family.

In Arabidopsis thaliana (Mouse-ear cress), this protein is Large ribosomal subunit protein eL18z (RPL18A).